A 394-amino-acid polypeptide reads, in one-letter code: Formate-dependent phosphoribosylglycinamide formyltransferase (394 aa).

N(1)-(5-phospho-beta-D-ribosyl)glycinamide is bound by residues 21–22 and glutamate 81; that span reads EL. ATP contacts are provided by residues arginine 113, lysine 154, 159–164, 194–197, and glutamate 202; these read SSGKGQ and EEFI. An ATP-grasp domain is found at 118-307; sequence RLAAEELGLP…QFELHVRAIL (190 aa). Residues glutamate 266 and glutamate 278 each contribute to the Mg(2+) site. N(1)-(5-phospho-beta-D-ribosyl)glycinamide-binding positions include aspartate 285, lysine 355, and 362–363; that span reads RR.

The protein belongs to the PurK/PurT family. As to quaternary structure, homodimer.

The enzyme catalyses N(1)-(5-phospho-beta-D-ribosyl)glycinamide + formate + ATP = N(2)-formyl-N(1)-(5-phospho-beta-D-ribosyl)glycinamide + ADP + phosphate + H(+). It participates in purine metabolism; IMP biosynthesis via de novo pathway; N(2)-formyl-N(1)-(5-phospho-D-ribosyl)glycinamide from N(1)-(5-phospho-D-ribosyl)glycinamide (formate route): step 1/1. Functionally, involved in the de novo purine biosynthesis. Catalyzes the transfer of formate to 5-phospho-ribosyl-glycinamide (GAR), producing 5-phospho-ribosyl-N-formylglycinamide (FGAR). Formate is provided by PurU via hydrolysis of 10-formyl-tetrahydrofolate. The chain is Formate-dependent phosphoribosylglycinamide formyltransferase from Pelobacter propionicus (strain DSM 2379 / NBRC 103807 / OttBd1).